Consider the following 216-residue polypeptide: Uracil phosphoribosyltransferase (216 aa).

Residues Arg-85, Arg-110, and 135 to 143 (DPMVATGYS) each bind 5-phospho-alpha-D-ribose 1-diphosphate. Uracil-binding positions include Ile-200 and 205–207 (GDA). Asp-206 contacts 5-phospho-alpha-D-ribose 1-diphosphate.

Belongs to the UPRTase family. The cofactor is Mg(2+).

It catalyses the reaction UMP + diphosphate = 5-phospho-alpha-D-ribose 1-diphosphate + uracil. The protein operates within pyrimidine metabolism; UMP biosynthesis via salvage pathway; UMP from uracil: step 1/1. With respect to regulation, allosterically activated by GTP. Its function is as follows. Catalyzes the conversion of uracil and 5-phospho-alpha-D-ribose 1-diphosphate (PRPP) to UMP and diphosphate. This Burkholderia thailandensis (strain ATCC 700388 / DSM 13276 / CCUG 48851 / CIP 106301 / E264) protein is Uracil phosphoribosyltransferase.